The chain runs to 224 residues: Synaptogyrin-2 (224 aa).

Met1 carries the N-acetylmethionine modification. Ser3 carries the phosphoserine modification. The 152-residue stretch at 20–171 (FLSQPQVVTR…LASLAYQRYK (152 aa)) folds into the MARVEL domain. The next 4 membrane-spanning stretches (helical) occupy residues 31–51 (VSMV…YTNI), 72–92 (SAIG…DAFF), 105–125 (VIGD…GFCF), and 147–167 (AAIT…SLAY).

It belongs to the synaptogyrin family. In terms of processing, may be tyrosine phosphorylated by Src.

The protein localises to the cytoplasmic vesicle membrane. The protein resides in the cytoplasmic vesicle. It localises to the secretory vesicle. It is found in the synaptic vesicle membrane. May play a role in regulated exocytosis. In neuronal cells, modulates the localization of synaptophysin/SYP into synaptic-like microvesicles and may therefore play a role in the formation and/or the maturation of this vesicles. May also play a role in GLUT4 storage and transport to the plasma membrane. This chain is Synaptogyrin-2, found in Mus musculus (Mouse).